The sequence spans 37 residues: MVESLLSGIVLGMIPITLAGLFVTAYLQYRRGDQLKI.

A helical membrane pass occupies residues 5 to 25 (LLSGIVLGMIPITLAGLFVTA).

Belongs to the PetG family. As to quaternary structure, the 4 large subunits of the cytochrome b6-f complex are cytochrome b6, subunit IV (17 kDa polypeptide, PetD), cytochrome f and the Rieske protein, while the 4 small subunits are PetG, PetL, PetM and PetN. The complex functions as a dimer.

It localises to the plastid. The protein resides in the chloroplast thylakoid membrane. Component of the cytochrome b6-f complex, which mediates electron transfer between photosystem II (PSII) and photosystem I (PSI), cyclic electron flow around PSI, and state transitions. PetG is required for either the stability or assembly of the cytochrome b6-f complex. In Mesostigma viride (Green alga), this protein is Cytochrome b6-f complex subunit 5.